We begin with the raw amino-acid sequence, 723 residues long: Bifunctional lysine-specific demethylase and histidyl-hydroxylase NO66 (723 aa).

2 disordered regions span residues 13-34 (KKTA…QKAA) and 48-213 (SAVK…APSC). The segment covering 14–31 (KTAKKPAKKTTKQNRQKQ) has biased composition (basic residues). A compositionally biased stretch (low complexity) spans 49-72 (AVKQNNGAKGKAKANGVKGNAKAQ). Acidic residues-rich tracts occupy residues 88–106 (ESVD…EDNE) and 114–129 (EDDY…EFEE). Residues 133-155 (NSPSGSCSCSASSGSSNTENSPP) show a composition bias toward low complexity. Positions 190–199 (EQKEGKELSK) are enriched in basic and acidic residues. Low complexity predominate over residues 204 to 213 (KSAPAAAPSC). The region spanning 379–518 (NPSTYLKGLR…NLMEALMPAV (140 aa)) is the JmjC domain. Positions 419, 421, and 484 each coordinate Fe cation.

It belongs to the ROX family. NO66 subfamily. It depends on Fe(2+) as a cofactor.

It localises to the nucleus. It catalyses the reaction N(6),N(6)-dimethyl-L-lysyl(36)-[histone H3] + 2 2-oxoglutarate + 2 O2 = L-lysyl(36)-[histone H3] + 2 formaldehyde + 2 succinate + 2 CO2. Its function is as follows. Oxygenase that can act as both a histone lysine demethylase and a ribosomal histidine hydroxylase. Specifically demethylates 'Lys-4' (H3K4me) and 'Lys-36' (H3K36me) of histone H3, thereby playing a central role in histone code. The protein is Bifunctional lysine-specific demethylase and histidyl-hydroxylase NO66 of Drosophila grimshawi (Hawaiian fruit fly).